Consider the following 376-residue polypeptide: Ribonucleoside-diphosphate reductase subunit beta (376 aa).

Fe cation is bound by residues Asp-85, Glu-116, and His-119. The active site involves Tyr-123. Fe cation is bound by residues Glu-205, Glu-239, and His-242.

It belongs to the ribonucleoside diphosphate reductase small chain family. Tetramer of two alpha and two beta subunits. Requires Fe cation as cofactor.

The catalysed reaction is a 2'-deoxyribonucleoside 5'-diphosphate + [thioredoxin]-disulfide + H2O = a ribonucleoside 5'-diphosphate + [thioredoxin]-dithiol. Provides the precursors necessary for DNA synthesis. Catalyzes the biosynthesis of deoxyribonucleotides from the corresponding ribonucleotides. This Buchnera aphidicola subsp. Acyrthosiphon pisum (strain APS) (Acyrthosiphon pisum symbiotic bacterium) protein is Ribonucleoside-diphosphate reductase subunit beta (nrdB).